The following is a 386-amino-acid chain: Probable dual-specificity RNA methyltransferase RlmN (386 aa).

Residue Glu-123 is the Proton acceptor of the active site. The Radical SAM core domain maps to 129–372 (YPTRTTLCIS…ATLRDTRGQD (244 aa)). An intrachain disulfide couples Cys-136 to Cys-377. Residues Cys-143, Cys-147, and Cys-150 each contribute to the [4Fe-4S] cluster site. Residues 198 to 199 (GE), Ser-232, 255 to 257 (SLH), and Asn-334 contribute to the S-adenosyl-L-methionine site. The active-site S-methylcysteine intermediate is the Cys-377.

The protein belongs to the radical SAM superfamily. RlmN family. [4Fe-4S] cluster is required as a cofactor.

It localises to the cytoplasm. It catalyses the reaction adenosine(2503) in 23S rRNA + 2 reduced [2Fe-2S]-[ferredoxin] + 2 S-adenosyl-L-methionine = 2-methyladenosine(2503) in 23S rRNA + 5'-deoxyadenosine + L-methionine + 2 oxidized [2Fe-2S]-[ferredoxin] + S-adenosyl-L-homocysteine. The enzyme catalyses adenosine(37) in tRNA + 2 reduced [2Fe-2S]-[ferredoxin] + 2 S-adenosyl-L-methionine = 2-methyladenosine(37) in tRNA + 5'-deoxyadenosine + L-methionine + 2 oxidized [2Fe-2S]-[ferredoxin] + S-adenosyl-L-homocysteine. Its function is as follows. Specifically methylates position 2 of adenine 2503 in 23S rRNA and position 2 of adenine 37 in tRNAs. This Bifidobacterium adolescentis (strain ATCC 15703 / DSM 20083 / NCTC 11814 / E194a) protein is Probable dual-specificity RNA methyltransferase RlmN.